The following is a 215-amino-acid chain: 3-isopropylmalate dehydratase small subunit (215 aa).

It belongs to the LeuD family. LeuD type 1 subfamily. Heterodimer of LeuC and LeuD.

The enzyme catalyses (2R,3S)-3-isopropylmalate = (2S)-2-isopropylmalate. Its pathway is amino-acid biosynthesis; L-leucine biosynthesis; L-leucine from 3-methyl-2-oxobutanoate: step 2/4. Its function is as follows. Catalyzes the isomerization between 2-isopropylmalate and 3-isopropylmalate, via the formation of 2-isopropylmaleate. This chain is 3-isopropylmalate dehydratase small subunit, found in Saccharophagus degradans (strain 2-40 / ATCC 43961 / DSM 17024).